A 446-amino-acid chain; its full sequence is Putative diacyglycerol O-acyltransferase Rv3371 (446 aa).

The Proton acceptor role is filled by His-129. Residues 425–446 are disordered; that stretch reads SRALPSAARRGRPSVPTARARH.

This sequence belongs to the long-chain O-acyltransferase family.

It catalyses the reaction an acyl-CoA + a 1,2-diacyl-sn-glycerol = a triacyl-sn-glycerol + CoA. The enzyme catalyses di-(9Z)-octadecenoylglycerol + (9Z)-octadecenoyl-CoA = 1,2,3-tri-(9Z-octadecenoyl)-glycerol + CoA. Its pathway is glycerolipid metabolism; triacylglycerol biosynthesis. Functionally, catalyzes the terminal and only committed step in triacylglycerol synthesis by using diacylglycerol and fatty acyl CoA as substrates. Required for storage lipid synthesis. Its function is as follows. Upon expression in E.coli functions weakly as a triacylglycerol synthase, making triacylglycerol (TG) from diolein and long-chain fatty acyl-CoA. Has no wax synthase activity to produce wax esters. This Mycobacterium tuberculosis (strain ATCC 25618 / H37Rv) protein is Putative diacyglycerol O-acyltransferase Rv3371.